Reading from the N-terminus, the 303-residue chain is Putative S-adenosyl-L-methionine-dependent methyltransferase MSMEG_1479/MSMEI_1443 (303 aa).

Residues D130 and 159-160 (DL) contribute to the S-adenosyl-L-methionine site.

This sequence belongs to the UPF0677 family.

Its function is as follows. Exhibits S-adenosyl-L-methionine-dependent methyltransferase activity. The protein is Putative S-adenosyl-L-methionine-dependent methyltransferase MSMEG_1479/MSMEI_1443 of Mycolicibacterium smegmatis (strain ATCC 700084 / mc(2)155) (Mycobacterium smegmatis).